Consider the following 147-residue polypeptide: Hemoglobin subunit epsilon (147 aa).

The 145-residue stretch at 3–147 folds into the Globin domain; it reads HFTAEEKAAI…VAIALGHKYH (145 aa). Phosphoserine occurs at positions 14 and 51. Residues His-64 and His-93 each contribute to the heme b site.

This sequence belongs to the globin family. Heterotetramer of two alpha chains and two epsilon chains in early embryonic hemoglobin Gower-2; two zeta chains and two epsilon chains in early embryonic hemoglobin Gower-1. As to expression, red blood cells.

The epsilon chain is a beta-type chain of early mammalian embryonic hemoglobin. This chain is Hemoglobin subunit epsilon (HBE1), found in Lagothrix lagotricha (Brown woolly monkey).